A 360-amino-acid chain; its full sequence is Phospho-N-acetylmuramoyl-pentapeptide-transferase (360 aa).

10 helical membrane passes run 27-47 (GALI…INSL), 71-91 (TPTM…LLWA), 93-113 (LSSI…SIGF), 134-154 (LGLE…NGQA), 168-188 (FIIN…VGAG), 199-219 (GLAI…AYLS), 239-259 (LAVV…FNAP), 262-282 (AIFM…TVAV), 288-308 (IVLV…IIQV), and 337-357 (QVVI…LSTL).

This sequence belongs to the glycosyltransferase 4 family. MraY subfamily. Mg(2+) is required as a cofactor.

It localises to the cell inner membrane. The catalysed reaction is UDP-N-acetyl-alpha-D-muramoyl-L-alanyl-gamma-D-glutamyl-meso-2,6-diaminopimeloyl-D-alanyl-D-alanine + di-trans,octa-cis-undecaprenyl phosphate = di-trans,octa-cis-undecaprenyl diphospho-N-acetyl-alpha-D-muramoyl-L-alanyl-D-glutamyl-meso-2,6-diaminopimeloyl-D-alanyl-D-alanine + UMP. Its pathway is cell wall biogenesis; peptidoglycan biosynthesis. In terms of biological role, catalyzes the initial step of the lipid cycle reactions in the biosynthesis of the cell wall peptidoglycan: transfers peptidoglycan precursor phospho-MurNAc-pentapeptide from UDP-MurNAc-pentapeptide onto the lipid carrier undecaprenyl phosphate, yielding undecaprenyl-pyrophosphoryl-MurNAc-pentapeptide, known as lipid I. This is Phospho-N-acetylmuramoyl-pentapeptide-transferase from Mesorhizobium japonicum (strain LMG 29417 / CECT 9101 / MAFF 303099) (Mesorhizobium loti (strain MAFF 303099)).